Reading from the N-terminus, the 62-residue chain is Andropin (62 aa).

An N-terminal signal peptide occupies residues 1-22; that stretch reads MKYFSVLVVLTLILAIVDQSDA.

This sequence belongs to the andropin family. In terms of tissue distribution, ejaculatory duct of adult males.

The protein localises to the secreted. In terms of biological role, male-specific peptide with moderate activity against Gram-positive bacteria. The protein is Andropin (Anp) of Drosophila teissieri (Fruit fly).